A 1189-amino-acid chain; its full sequence is Increased DNA methylation 1 (1189 aa).

2 disordered regions span residues 475–498 and 523–597; these read KNLHRRSKKISDIKPASLDQHDSL and SRDE…CRLL. Residues 523–532 show a composition bias toward basic and acidic residues; sequence SRDERLRNEK. 2 stretches are compositionally biased toward basic residues: residues 541-550 and 565-590; these read KKGRKKARKH and NKGKFSRSSQKKKTQKPKARTKKRNN. The PHD-type 1 zinc-finger motif lies at 726–771; sequence DDSCGVCGDGGELICCDNCPSTFHQACLSMQVLPEGSWYCSSCTCW. A PHD-type 2; degenerate zinc finger spans residues 767 to 823; it reads SCTCWICSELVSDNAERSQDFKCSQCAHKYHGTCLQGISKRRKLFPETYFCGKNCEK. Residues 879–1024 form the N-acetyltransferase domain; that stretch reads MEESFLSMVD…GTTLLKKTLY (146 aa). The tract at residues 1031–1157 is disordered; sequence TMKGVCLSKE…SSSSAALEEV (127 aa). 3 stretches are compositionally biased toward basic and acidic residues: residues 1038–1050, 1102–1114, and 1129–1145; these read SKERNNPSNKEAD, NPSRDSNANDRPN, and CLQKDVSKLSEEGKETT. Positions 1147 to 1157 are enriched in low complexity; the sequence is ASSSSAALEEV.

In terms of assembly, interacts (via N-terminus) with IDM2. Interacts with IMD3. Part of a complex made of MBD7, IDM1, IDM2 and IDM3. As to expression, expressed in cotyledons and hypocotyls in young seedlings.

It localises to the nucleus. Functionally, histone H3 acetyltransferase that binds methylated DNA at chromatin sites lacking histone H3K4 di- or trimethylation and catalyzes H3K18 and H3K23 acetylation. Prevents the transcriptional silencing of transgenes and of some endogenous genes. Requires the presence of IDM2 for efficient H3K18 acetylation, but not for H3K23 acetylation. The polypeptide is Increased DNA methylation 1 (Arabidopsis thaliana (Mouse-ear cress)).